A 295-amino-acid chain; its full sequence is Succinate dehydrogenase assembly factor 2, mitochondrial (295 aa).

Disordered stretches follow at residues 35-90 (AKDN…PELL), 208-227 (PEEGTPAEDTPTETWQRTGA), and 269-295 (TGFHAAKNKKTGGSGLGRMPNIQVFDS). The segment covering 45–75 (STPSTAPEYRQNQTSKPPNQFMPNSTSTMTN) has biased composition (polar residues).

It belongs to the SDHAF2 family. As to quaternary structure, interacts with the flavoprotein subunit within the SDH catalytic dimer.

The protein resides in the mitochondrion matrix. Plays an essential role in the assembly of succinate dehydrogenase (SDH), an enzyme complex (also referred to as respiratory complex II) that is a component of both the tricarboxylic acid (TCA) cycle and the mitochondrial electron transport chain, and which couples the oxidation of succinate to fumarate with the reduction of ubiquinone (coenzyme Q) to ubiquinol. Required for flavinylation (covalent attachment of FAD) of the flavoprotein subunit of the SDH catalytic dimer. In Aspergillus terreus (strain NIH 2624 / FGSC A1156), this protein is Succinate dehydrogenase assembly factor 2, mitochondrial.